Consider the following 448-residue polypeptide: MSHGLSPRPATAKKSADLKGTVRIPGDKSISHRSFMFGGLASGETRITGLLEGEDVINTGKAMQAMGAKIRKEGDTWIINGVGNGALLAPEAPLDFGNAGTGCRLTMGLVGVYDFDSTFIGDASLTKRPMGRVLDPLREMGVQVKSAEGDRLPVTLRGPKTPNPITYRVPMASAQVKSAVLLAGLNTPGITTVIEPVMTRDHTEKMLQGFGANLSVETDTAGVRTIRLEGRGKLTGQVIDVPGDPSSTAFPLVAALLVPGSDVTILNVLMNPTRTGLILTLQEMGANIEVMNPRLAGGEDVADLRVRYSELKGVTVPEERAPSMIDEYPVLAVAAAFAEGATVMNGLDELRVKESDRLSAVADGLKLNGVDCDEGEASLVVRGRPGGKGLGNAAGGQVKTHLDHRIAMSFLVLGLASEHPVTVDDATMIATSFPEFMDLMTGLGATIE.

3 residues coordinate 3-phosphoshikimate: lysine 28, serine 29, and arginine 33. Phosphoenolpyruvate is bound at residue lysine 28. Glycine 100 and arginine 128 together coordinate phosphoenolpyruvate. 3-phosphoshikimate is bound by residues serine 173, glutamine 175, aspartate 326, and lysine 353. Residue glutamine 175 coordinates phosphoenolpyruvate. Residue aspartate 326 is the Proton acceptor of the active site. Phosphoenolpyruvate contacts are provided by arginine 357 and arginine 405.

It belongs to the EPSP synthase family. Monomer.

The protein resides in the cytoplasm. The enzyme catalyses 3-phosphoshikimate + phosphoenolpyruvate = 5-O-(1-carboxyvinyl)-3-phosphoshikimate + phosphate. It participates in metabolic intermediate biosynthesis; chorismate biosynthesis; chorismate from D-erythrose 4-phosphate and phosphoenolpyruvate: step 6/7. Catalyzes the transfer of the enolpyruvyl moiety of phosphoenolpyruvate (PEP) to the 5-hydroxyl of shikimate-3-phosphate (S3P) to produce enolpyruvyl shikimate-3-phosphate and inorganic phosphate. In Sinorhizobium fredii (strain NBRC 101917 / NGR234), this protein is 3-phosphoshikimate 1-carboxyvinyltransferase.